The following is a 75-amino-acid chain: Sec-independent protein translocase protein TatA (75 aa).

The helical transmembrane segment at 1 to 21 threads the bilayer; it reads MGMPSMPELLIVLAIVVLLFG. The interval 47–75 is disordered; sequence DEEEEVKEITKKEEPKVEAAAEEKKSENA. Residues 53–75 are compositionally biased toward basic and acidic residues; sequence KEITKKEEPKVEAAAEEKKSENA.

The protein belongs to the TatA/E family. As to quaternary structure, the Tat system comprises two distinct complexes: a TatABC complex, containing multiple copies of TatA, TatB and TatC subunits, and a separate TatA complex, containing only TatA subunits. Substrates initially bind to the TatABC complex, which probably triggers association of the separate TatA complex to form the active translocon.

Its subcellular location is the cell inner membrane. Functionally, part of the twin-arginine translocation (Tat) system that transports large folded proteins containing a characteristic twin-arginine motif in their signal peptide across membranes. TatA could form the protein-conducting channel of the Tat system. This chain is Sec-independent protein translocase protein TatA, found in Sulfurovum sp. (strain NBC37-1).